A 1079-amino-acid polypeptide reads, in one-letter code: Electrogenic sodium bicarbonate cotransporter 1 (1079 aa).

The interval 1-62 (MEDEAVLDRG…EKREKERISE (62 aa)) is required for interaction with AHCYL1. At 1-466 (MEDEAVLDRG…FASDFYDALN (466 aa)) the chain is on the cytoplasmic side. At Tyr30 the chain carries Phosphotyrosine. Residues 39-52 (YRRRRRHKRKTGHK) are compositionally biased toward basic residues. Residues 39–78 (YRRRRRHKRKTGHKEKREKERISENYSDKSDVENADESSS) are disordered. Thr49 is subject to Phosphothreonine; by PKA. Over residues 53–70 (EKREKERISENYSDKSDV) the composition is skewed to basic and acidic residues. Phosphoserine is present on residues Ser61, Ser65, Ser68, Ser223, Ser232, Ser233, and Ser245. The disordered stretch occupies residues 237–265 (MFTSPDNGSPAMTHRNLTSSSLNDISDKP). 2 positions are modified to phosphothreonine: Thr249 and Thr254. Residues 251 to 260 (RNLTSSSLND) are compositionally biased toward polar residues. Phosphoserine occurs at positions 256, 257, and 262. A helical membrane pass occupies residues 467–491 (IQSLSAILFIYLATVTNAITFGGLL). Over 492-501 (GDATDNMQGV) the chain is Extracellular. Residues 502–520 (LESFLGTAVSGAIFCLFAG) form a helical membrane-spanning segment. Gln521 is a topological domain (cytoplasmic). Residues 522 to 542 (PLTILSSTGPVLVFERLLFNF) form a discontinuously helical membrane-spanning segment. Over 543–550 (SKDHNFDY) the chain is Extracellular. The chain crosses the membrane as a helical span at residues 551-571 (LEFRLWIGLWSAFLCLILVAT). The Cytoplasmic segment spans residues 572–585 (DASFLVQYFTRFTE). Residues 586 to 609 (EGFSSLISFIFIYDAFKKMIKLAD) traverse the membrane as a helical segment. Residues 610 to 692 (YYPINSDFKV…GNNCNFVPDV (83 aa)) are Extracellular-facing. The chain crosses the membrane as a helical span at residues 693 to 710 (TLMSFILFLGTYTSSMAL). Over 711 to 725 (KKFKTSRYFPTTARK) the chain is Cytoplasmic. The helical transmembrane segment at 726–745 (LISDFAIILSILIFCVIDAL) threads the bilayer. The Extracellular segment spans residues 746–779 (VGVDTPKLIVPSEFKPTSPNRGWFVPPFGGNPWW). The tract at residues 748–779 (VDTPKLIVPSEFKPTSPNRGWFVPPFGGNPWW) is interaction with CA4. The helical transmembrane segment at 780 to 807 (VYLAAAIPALLVTILIFMDQQITAVIVN) threads the bilayer. Residues 808–819 (RKEHKLKKGAGY) are Cytoplasmic-facing. Residues 820-836 (HLDLFWVAILMVVCSFM) form a helical membrane-spanning segment. Residue Ala837 is a topological domain, extracellular. The discontinuously helical transmembrane segment at 838–855 (LPWYVAATVISIAHIDSL) threads the bilayer. The Cytoplasmic portion of the chain corresponds to 856–877 (KMETETSAPGEQPKFLGVREQR). Residues 878–894 (VTGTLVFILTGLSVFMA) traverse the membrane as a helical segment. Topologically, residues 895 to 901 (PILKFIP) are extracellular. A helical membrane pass occupies residues 902 to 918 (MPVLYGVFLYMGVASLN). Topologically, residues 919–960 (GVQFMDRLKLLLMPLKHQPDFIYLRHVPLRRVHLFTFLQVLC) are cytoplasmic. The discontinuously helical intramembrane region spans 961 to 986 (LALLWILKSTVAAIIFPVMILALVAV). At 987–1079 (RKGMDYLFSQ…STFLERHTSC (93 aa)) the chain is on the cytoplasmic side. Residues 1002-1004 (LDD) form a CA2-binding region. The segment at 1012-1079 (KKKEDEKKKK…STFLERHTSC (68 aa)) is disordered. Ser1026 bears the Phosphoserine; by PKA mark. A Phosphoserine modification is found at Ser1029. The interval 1030 to 1033 (DNDD) is CA2-binding. Ser1034 and Ser1044 each carry phosphoserine. The tract at residues 1057 to 1059 (FLS) is required for basolateral targeting. Positions 1062–1079 (KPSDREKSSTFLERHTSC) are enriched in basic and acidic residues. Ser1069 bears the Phosphoserine mark.

This sequence belongs to the anion exchanger (TC 2.A.31) family. Homodimer. Interacts with CA2/carbonic anhydrase 2 and CA4/carbonic anhydrase 4 which may regulate transporter activity. Isoform 1 but not isoform 2 interacts with AHCYL1 (via PEST domain when phosphorylated); the interaction increases SLC4A4 isoform 1 activity. Interacts with AHCYL2. Phosphorylation of Ser-1026 by PKA increases the binding of CA2 and changes the Na(+):HCO3(-) stoichiometry of the transporter from 3:1 to 2:1. Phosphorylated in presence of STK39 and dephosphorylated in presence of PP1 phosphatase; phosphorylation seems to inhibit SLC4A4 activity. In terms of processing, N-glycosylated. May not be necessary for the transporter basic functions. As to expression, expressed in colonic mucosa, kidney cortex and to gastric mucosa.

Its subcellular location is the basolateral cell membrane. It is found in the cell membrane. It carries out the reaction 2 hydrogencarbonate(out) + Na(+)(out) = 2 hydrogencarbonate(in) + Na(+)(in). The catalysed reaction is 3 hydrogencarbonate(out) + Na(+)(out) = 3 hydrogencarbonate(in) + Na(+)(in). Functionally, electrogenic sodium/bicarbonate cotransporter with a Na(+):HCO3(-) stoichiometry varying from 1:2 to 1:3. May regulate bicarbonate influx/efflux at the basolateral membrane of cells and regulate intracellular pH. In Oryctolagus cuniculus (Rabbit), this protein is Electrogenic sodium bicarbonate cotransporter 1 (SLC4A4).